Reading from the N-terminus, the 483-residue chain is Replication factor C large subunit (483 aa).

43–50 (GKPGIGKT) provides a ligand contact to ATP. Residues 417–442 (ELKKKKKEEDAKGKKARGSKKEKEPI) are compositionally biased toward basic and acidic residues. The segment at 417–483 (ELKKKKKEED…KSSQSTLFSF (67 aa)) is disordered. Polar residues predominate over residues 448 to 457 (SIDSFSSQEP).

Belongs to the activator 1 small subunits family. RfcL subfamily. Heteromultimer composed of small subunits (RfcS) and large subunits (RfcL).

Functionally, part of the RFC clamp loader complex which loads the PCNA sliding clamp onto DNA. This Methanospirillum hungatei JF-1 (strain ATCC 27890 / DSM 864 / NBRC 100397 / JF-1) protein is Replication factor C large subunit.